Consider the following 228-residue polypeptide: Cytochrome c oxidase subunit 2 (228 aa).

At 1–14 the chain is on the mitochondrial intermembrane side; that stretch reads MAYPLQLGLQDASS. A helical transmembrane segment spans residues 15–45; the sequence is PIMEELTNFHDHTLMIVFLISSLVLYLISLM. Residues 46-59 lie on the Mitochondrial matrix side of the membrane; it reads LTTKLIHTSTMDAQ. The chain crosses the membrane as a helical span at residues 60–87; the sequence is EVETIWTILPAIILILIALPSLRILYMM. At 88–228 the chain is on the mitochondrial intermembrane side; the sequence is DEINNPVLTV…FENWSVSMTQ (141 aa). Cu cation contacts are provided by histidine 161, cysteine 196, glutamate 198, cysteine 200, histidine 204, and methionine 207. Glutamate 198 provides a ligand contact to Mg(2+).

It belongs to the cytochrome c oxidase subunit 2 family. As to quaternary structure, component of the cytochrome c oxidase (complex IV, CIV), a multisubunit enzyme composed of 14 subunits. The complex is composed of a catalytic core of 3 subunits MT-CO1, MT-CO2 and MT-CO3, encoded in the mitochondrial DNA, and 11 supernumerary subunits COX4I, COX5A, COX5B, COX6A, COX6B, COX6C, COX7A, COX7B, COX7C, COX8 and NDUFA4, which are encoded in the nuclear genome. The complex exists as a monomer or a dimer and forms supercomplexes (SCs) in the inner mitochondrial membrane with NADH-ubiquinone oxidoreductase (complex I, CI) and ubiquinol-cytochrome c oxidoreductase (cytochrome b-c1 complex, complex III, CIII), resulting in different assemblies (supercomplex SCI(1)III(2)IV(1) and megacomplex MCI(2)III(2)IV(2)). Found in a complex with TMEM177, COA6, COX18, COX20, SCO1 and SCO2. Interacts with TMEM177 in a COX20-dependent manner. Interacts with COX20. Interacts with COX16. Cu cation serves as cofactor.

The protein localises to the mitochondrion inner membrane. The catalysed reaction is 4 Fe(II)-[cytochrome c] + O2 + 8 H(+)(in) = 4 Fe(III)-[cytochrome c] + 2 H2O + 4 H(+)(out). Its function is as follows. Component of the cytochrome c oxidase, the last enzyme in the mitochondrial electron transport chain which drives oxidative phosphorylation. The respiratory chain contains 3 multisubunit complexes succinate dehydrogenase (complex II, CII), ubiquinol-cytochrome c oxidoreductase (cytochrome b-c1 complex, complex III, CIII) and cytochrome c oxidase (complex IV, CIV), that cooperate to transfer electrons derived from NADH and succinate to molecular oxygen, creating an electrochemical gradient over the inner membrane that drives transmembrane transport and the ATP synthase. Cytochrome c oxidase is the component of the respiratory chain that catalyzes the reduction of oxygen to water. Electrons originating from reduced cytochrome c in the intermembrane space (IMS) are transferred via the dinuclear copper A center (CU(A)) of subunit 2 and heme A of subunit 1 to the active site in subunit 1, a binuclear center (BNC) formed by heme A3 and copper B (CU(B)). The BNC reduces molecular oxygen to 2 water molecules using 4 electrons from cytochrome c in the IMS and 4 protons from the mitochondrial matrix. This chain is Cytochrome c oxidase subunit 2 (MT-CO2), found in Meriones shawi (Shaw's jird).